Reading from the N-terminus, the 67-residue chain is Probable Sec-independent protein translocase protein TatE (67 aa).

The chain crosses the membrane as a helical span at residues 1–21 (MEGISIAKLLIIGALIVLLFG). Positions 44–67 (KDEDTSAARTTAEETPAERVSHKD) are disordered.

This sequence belongs to the TatA/E family. TatE subfamily.

The protein localises to the cell inner membrane. In terms of biological role, part of the twin-arginine translocation (Tat) system that transports large folded proteins containing a characteristic twin-arginine motif in their signal peptide across membranes. TatE shares overlapping functions with TatA. The chain is Probable Sec-independent protein translocase protein TatE from Pantoea ananatis (strain LMG 20103).